A 265-amino-acid polypeptide reads, in one-letter code: Probable autolysin SsaALP (265 aa).

The N-terminal stretch at 1 to 25 (MKKLAFAITATSGAAAFLTHHDAQA) is a signal peptide. LysM domains lie at 27 to 70 (TQHT…VISV) and 89 to 132 (SSHT…TLQI). The disordered stretch occupies residues 72 to 92 (GSDAQNTSNTSPQAGSASSHT). Positions 74–92 (DAQNTSNTSPQAGSASSHT) are enriched in polar residues. Positions 141-265 (TPTATTGSNG…SEVSSYAFIH (125 aa)) constitute a Peptidase C51 domain.

The enzyme catalyses Hydrolyzes the link between N-acetylmuramoyl residues and L-amino acid residues in certain cell-wall glycopeptides.. Its function is as follows. Has weak lytic activity toward S.aureus cells. The polypeptide is Probable autolysin SsaALP (Staphylococcus aureus (strain NCTC 8325 / PS 47)).